The chain runs to 630 residues: Polyphenol oxidase A, chloroplastic (630 aa).

The segment at 1–25 (MASLCSNSSSTSLKTPFTSSTTCLS) is disordered. Residues 1–87 (MASLCSNSSS…ANAIPLAASA (87 aa)) constitute a chloroplast transit peptide. Cystine bridges form between C98–C114 and C113–C181. 6 residues coordinate Cu cation: H180, H198, H207, H328, H332, and H370. The 2'-(S-cysteinyl)-histidine (Cys-His) cross-link spans 184–198 (CNGGYSIDGKVLQVH).

The protein belongs to the tyrosinase family. Cu(2+) is required as a cofactor.

It localises to the plastid. Its subcellular location is the chloroplast thylakoid lumen. The catalysed reaction is 2 catechol + O2 = 2 1,2-benzoquinone + 2 H2O. In terms of biological role, catalyzes the oxidation of mono- and o-diphenols to o-diquinones. This is Polyphenol oxidase A, chloroplastic from Solanum lycopersicum (Tomato).